A 236-amino-acid chain; its full sequence is ATP synthase subunit a (236 aa).

Transmembrane regions (helical) follow at residues 17–37 (LANVLMITVTSVIVFVIAVLA), 80–100 (MTLIMYIFVANMLGLPFSVVI), 114–134 (VVTLTLATMVVALSHYYGIKL), 179–199 (ILLALLAGSLATGVGGTIAAI), and 208–228 (FSIFVGAIQAFIFTMLTMVYM).

Belongs to the ATPase A chain family. F-type ATPases have 2 components, CF(1) - the catalytic core - and CF(0) - the membrane proton channel. CF(1) has five subunits: alpha(3), beta(3), gamma(1), delta(1), epsilon(1). CF(0) has three main subunits: a(1), b(2) and c(9-12). The alpha and beta chains form an alternating ring which encloses part of the gamma chain. CF(1) is attached to CF(0) by a central stalk formed by the gamma and epsilon chains, while a peripheral stalk is formed by the delta and b chains.

It localises to the cell membrane. Its function is as follows. Key component of the proton channel; it plays a direct role in the translocation of protons across the membrane. The polypeptide is ATP synthase subunit a (Anoxybacillus flavithermus (strain DSM 21510 / WK1)).